A 393-amino-acid polypeptide reads, in one-letter code: MGYYALTETTAIQYAKEHGYFEKKANVFCHEIGDGNLNYVFKLDDGEKSIIIKQALPYAKVVGESWPLSIKRATIESKALKIFAKYVPDYVPVVHSHDEELAVTVIEDLSRLTITRKGLIDGEEYPLLSQHIGRFLANVLFYTSDFGLQSEEKRGLEGTFVNPDLCKITEDLVFTDPFGHYDTNDYEPELQLAVDELWSDKTLKLKVAQYKYKFLTRKEALIHGDLHTGSIFSSPSETKVIDPEFATYGPFGFDLGQFIANLLLNALSREEEQRSVLFFHIEKTWSYFVDTFTKLWIGEGVEAYTKEKQWLPIILQNIFTDVVGFAGCELIRRTIGLAHVADLDEIANKEKRIQAKKQALYLGKELIKYESKNADIQLFRTLFQQTVSGGVKA.

ATP is bound by residues N38, K53, and 107 to 109 (EDL). D225 serves as a coordination point for substrate. ATP is bound at residue 242 to 244 (DPE). Residue R332 coordinates substrate.

The protein belongs to the methylthioribose kinase family. Homodimer.

It catalyses the reaction 5-(methylsulfanyl)-D-ribose + ATP = 5-(methylsulfanyl)-alpha-D-ribose 1-phosphate + ADP + H(+). The protein operates within amino-acid biosynthesis; L-methionine biosynthesis via salvage pathway; S-methyl-5-thio-alpha-D-ribose 1-phosphate from S-methyl-5'-thioadenosine (hydrolase route): step 2/2. Its function is as follows. Catalyzes the phosphorylation of methylthioribose into methylthioribose-1-phosphate. The protein is Methylthioribose kinase of Bacillus cereus (strain ATCC 10987 / NRS 248).